The following is a 293-amino-acid chain: Proline iminopeptidase (293 aa).

Catalysis depends on Ser-105, which acts as the Nucleophile. Residue Asp-244 is part of the active site. Residue His-271 is the Proton donor of the active site.

It belongs to the peptidase S33 family. Part of the tricorn proteolytic complex.

The enzyme catalyses Release of N-terminal proline from a peptide.. Functionally, cleaves H-Pro-AMC as well as a wide spectrum of amino acid substrates and several peptide substrates without a proline at the N-terminus. Proteases F1, F2 and F3 degrade oligopeptides produced by Tricorn (themselves probably produced by the proteasome) yielding free amino acids. The protein is Proline iminopeptidase (pip) of Thermoplasma acidophilum (strain ATCC 25905 / DSM 1728 / JCM 9062 / NBRC 15155 / AMRC-C165).